A 252-amino-acid chain; its full sequence is NAD(P)H-quinone oxidoreductase subunit K (252 aa).

[4Fe-4S] cluster is bound by residues Cys73, Cys74, Cys138, and Cys169. Over residues 225 to 236 the composition is skewed to polar residues; that stretch reads ASTQKQALSPSQ. The disordered stretch occupies residues 225–252; it reads ASTQKQALSPSQEIPLEDQNEATKEIAQ.

This sequence belongs to the complex I 20 kDa subunit family. In terms of assembly, NDH-1 can be composed of about 15 different subunits; different subcomplexes with different compositions have been identified which probably have different functions. [4Fe-4S] cluster serves as cofactor.

It localises to the cellular thylakoid membrane. It carries out the reaction a plastoquinone + NADH + (n+1) H(+)(in) = a plastoquinol + NAD(+) + n H(+)(out). It catalyses the reaction a plastoquinone + NADPH + (n+1) H(+)(in) = a plastoquinol + NADP(+) + n H(+)(out). Its function is as follows. NDH-1 shuttles electrons from an unknown electron donor, via FMN and iron-sulfur (Fe-S) centers, to quinones in the respiratory and/or the photosynthetic chain. The immediate electron acceptor for the enzyme in this species is believed to be plastoquinone. Couples the redox reaction to proton translocation, and thus conserves the redox energy in a proton gradient. Cyanobacterial NDH-1 also plays a role in inorganic carbon-concentration. The polypeptide is NAD(P)H-quinone oxidoreductase subunit K (Prochlorococcus marinus (strain MIT 9211)).